Consider the following 361-residue polypeptide: Putative agmatine deiminase (361 aa).

The Amidino-cysteine intermediate role is filled by cysteine 354.

Belongs to the agmatine deiminase family.

It catalyses the reaction agmatine + H2O = N-carbamoylputrescine + NH4(+). In Streptococcus pneumoniae (strain ATCC 700669 / Spain 23F-1), this protein is Putative agmatine deiminase.